Reading from the N-terminus, the 483-residue chain is Bifunctional pantoate ligase/cytidylate kinase (483 aa).

Positions 1 to 246 (MPTMGALHAG…CGSTRLIDHA (246 aa)) are pantoate--beta-alanine ligase. 4-11 (MGALHAGH) is an ATP binding site. The active-site Proton donor is the His-11. A (R)-pantoate-binding site is contributed by Gln-34. Gln-34 contributes to the beta-alanine binding site. 124-127 (GEKD) provides a ligand contact to ATP. Gln-130 contributes to the (R)-pantoate binding site. ATP-binding positions include Val-153 and 161–164 (LSSR). A cytidylate kinase region spans residues 247–483 (FLMTRQPLVA…AEEAWPTPQR (237 aa)).

This sequence in the N-terminal section; belongs to the pantothenate synthetase family. The protein in the C-terminal section; belongs to the cytidylate kinase family. Type 1 subfamily.

The protein resides in the cytoplasm. The enzyme catalyses (R)-pantoate + beta-alanine + ATP = (R)-pantothenate + AMP + diphosphate + H(+). It catalyses the reaction CMP + ATP = CDP + ADP. The catalysed reaction is dCMP + ATP = dCDP + ADP. It functions in the pathway cofactor biosynthesis; (R)-pantothenate biosynthesis; (R)-pantothenate from (R)-pantoate and beta-alanine: step 1/1. Catalyzes the condensation of pantoate with beta-alanine in an ATP-dependent reaction via a pantoyl-adenylate intermediate. Its function is as follows. Catalyzes the transfer of a phosphate group from ATP to either CMP or dCMP to form CDP or dCDP and ADP, respectively. This is Bifunctional pantoate ligase/cytidylate kinase from Synechococcus sp. (strain CC9902).